Consider the following 177-residue polypeptide: Cytochrome c oxidase assembly protein CtaG (177 aa).

At 1-8 (MTQKAKNT) the chain is on the cytoplasmic side. The chain crosses the membrane as a helical; Signal-anchor for type II membrane protein span at residues 9–29 (IYLLILIILSMLCLVYASVPL). Over 30–177 (YSIFCKVTGY…TFFKYKENTK (148 aa)) the chain is Periplasmic.

The protein belongs to the COX11/CtaG family.

It is found in the cell inner membrane. In terms of biological role, exerts its effect at some terminal stage of cytochrome c oxidase synthesis, probably by being involved in the insertion of the copper B into subunit I. This chain is Cytochrome c oxidase assembly protein CtaG, found in Ehrlichia ruminantium (strain Welgevonden).